A 512-amino-acid chain; its full sequence is PTS system mannitol-specific EIICB component (512 aa).

Residues 1 to 28 (MSQTEEKKGIGRRVQAFGSFLSSMIMPN) are Cytoplasmic-facing. The region spanning 17–349 (FGSFLSSMIM…MKFTREPKQD (333 aa)) is the PTS EIIC type-2 domain. Residues 29–50 (IGAFIAWGFIAAIFIDNGWLPN) traverse the membrane as a helical segment. Residues 51–54 (KDLA) lie on the Extracellular side of the membrane. The helical transmembrane segment at 55–75 (TLAGPMITYLIPLLIAFSGGR) threads the bilayer. Residues 76–139 (LIYDLRGGII…QGFEMLFNNF (64 aa)) lie on the Cytoplasmic side of the membrane. A helical transmembrane segment spans residues 140 to 161 (SAGILGFIMTIAGFKILAPLMK). Over 162–170 (FIMHILSVA) the chain is Extracellular. The helical transmembrane segment at 171–191 (VEALVHAHLLPLVSILVEPAK) threads the bilayer. Over 192–278 (IVFLNNAINH…VLMRPLLFIA (87 aa)) the chain is Cytoplasmic. A helical membrane pass occupies residues 279–298 (VILGGMTGVATYQATGFGFK). The Extracellular portion of the chain corresponds to 299-318 (SPASPGSFIVYCLNAPRGEF). The helical transmembrane segment at 319 to 340 (LHMLLGVFLAALVSFVVAALIM) threads the bilayer. The Cytoplasmic portion of the chain corresponds to 341-512 (KFTREPKQDL…LNNLKKDDQA (172 aa)). The disordered stretch occupies residues 355 to 402 (AQMENTKGKKSSVASKLVSSDKNVNTEENASGNVSETSSSDDDPEALL). Over residues 365-376 (SSVASKLVSSDK) the composition is skewed to low complexity. Residues 380 to 392 (TEENASGNVSETS) show a composition bias toward polar residues. One can recognise a PTS EIIB type-2 domain in the interval 419–512 (NHVIFACDAG…LNNLKKDDQA (94 aa)). Cys-425 acts as the Phosphocysteine intermediate; for EIIB activity in catalysis. Cys-425 carries the post-translational modification Phosphocysteine; by EIIA.

In terms of assembly, homodimer.

It localises to the cell membrane. The catalysed reaction is D-mannitol(out) + N(pros)-phospho-L-histidyl-[protein] = D-mannitol 1-phosphate(in) + L-histidyl-[protein]. Functionally, the phosphoenolpyruvate-dependent sugar phosphotransferase system (sugar PTS), a major carbohydrate active transport system, catalyzes the phosphorylation of incoming sugar substrates concomitantly with their translocation across the cell membrane. The enzyme II CmtAB PTS system is involved in D-mannitol transport. This is PTS system mannitol-specific EIICB component (mtlA) from Staphylococcus aureus (strain COL).